The sequence spans 131 residues: D-ribose pyranase (131 aa).

H20 (proton donor) is an active-site residue. Substrate contacts are provided by residues D28, H98, and 120 to 122 (YAN).

The protein belongs to the RbsD / FucU family. RbsD subfamily. In terms of assembly, homodecamer.

The protein localises to the cytoplasm. The enzyme catalyses beta-D-ribopyranose = beta-D-ribofuranose. It functions in the pathway carbohydrate metabolism; D-ribose degradation; D-ribose 5-phosphate from beta-D-ribopyranose: step 1/2. In terms of biological role, catalyzes the interconversion of beta-pyran and beta-furan forms of D-ribose. In Bacillus cereus (strain ZK / E33L), this protein is D-ribose pyranase.